The chain runs to 221 residues: Thymidylate kinase (221 aa).

Position 10 to 17 (Gly10 to Thr17) interacts with ATP.

This sequence belongs to the thymidylate kinase family.

It carries out the reaction dTMP + ATP = dTDP + ADP. Functionally, phosphorylation of dTMP to form dTDP in both de novo and salvage pathways of dTTP synthesis. The protein is Thymidylate kinase of Desulforudis audaxviator (strain MP104C).